A 114-amino-acid chain; its full sequence is Protein S40-2 (114 aa).

The interval 23–50 (RYTKLYNSRNDEKKGTRRHETAEKTSPV) is disordered. The span at 31-45 (RNDEKKGTRRHETAE) shows a compositional bias: basic and acidic residues.

It belongs to the senescence regulator S40 family.

The protein resides in the cytoplasm. The polypeptide is Protein S40-2 (Arabidopsis thaliana (Mouse-ear cress)).